Here is a 355-residue protein sequence, read N- to C-terminus: uncharacterized protein (355 aa).

A helical transmembrane segment spans residues 6-26 (LLTPYFLLSILSVGVFTATAA).

Belongs to the SUN family.

Its subcellular location is the membrane. This is an uncharacterized protein from Saccharomyces cerevisiae (strain ATCC 204508 / S288c) (Baker's yeast).